A 146-amino-acid chain; its full sequence is Large ribosomal subunit protein uL15 (146 aa).

The segment covering 1 to 13 has biased composition (basic and acidic residues); that stretch reads MKLHELKPAEGSR. Positions 1-48 are disordered; the sequence is MKLHELKPAEGSRKVRNRVGRGIGSGNGKTAGKGHKGQNARSGGGVRL. Positions 21–31 are enriched in gly residues; that stretch reads RGIGSGNGKTA.

This sequence belongs to the universal ribosomal protein uL15 family. In terms of assembly, part of the 50S ribosomal subunit.

In terms of biological role, binds to the 23S rRNA. The protein is Large ribosomal subunit protein uL15 of Bacillus cytotoxicus (strain DSM 22905 / CIP 110041 / 391-98 / NVH 391-98).